Reading from the N-terminus, the 226-residue chain is Oxaloacetate tautomerase FAHD2, mitochondrial (226 aa).

A mitochondrion-targeting transit peptide spans 1–30; sequence MAAAAQRLLAASTKIVGVGRNFVAHAKELG. Residues E69, E71, and D100 each contribute to the Mg(2+) site.

This sequence belongs to the FAH family. Requires Mg(2+) as cofactor. The cofactor is Mn(2+).

Its subcellular location is the mitochondrion. It carries out the reaction oxaloacetate = enol-oxaloacetate. Functionally, tautomerase that converts enol-oxaloacetate, a strong inhibitor of succinate dehydrogenase, to the physiological keto form of oxaloacetate. This is Oxaloacetate tautomerase FAHD2, mitochondrial from Oryza sativa subsp. japonica (Rice).